A 167-amino-acid chain; its full sequence is Zymogen granule membrane protein 16 (167 aa).

The first 16 residues, 1-16, serve as a signal peptide directing secretion; the sequence is MLTVALLALLCASASG. The region spanning 24–159 is the Jacalin-type lectin domain; that stretch reads SSYSGEYGGG…IDAIGLHWDV (136 aa).

The protein belongs to the jacalin lectin family. Highly expressed in liver. Detected at lower levels in colon, ileum and jejunum.

Its subcellular location is the secreted. The protein resides in the extracellular space. It localises to the extracellular matrix. The protein localises to the zymogen granule lumen. It is found in the golgi apparatus lumen. In terms of biological role, may play a role in protein trafficking. May act as a linker molecule between the submembranous matrix on the luminal side of zymogen granule membrane (ZGM) and aggregated secretory proteins during granule formation in the TGN. The protein is Zymogen granule membrane protein 16 (ZG16) of Homo sapiens (Human).